A 1610-amino-acid chain; its full sequence is E3 ubiquitin-protein ligase listerin (1610 aa).

Residues M1 to G10 show a composition bias toward basic and acidic residues. The disordered stretch occupies residues M1–S20. HEAT repeat units follow at residues L110–A148, V314–T351, I372–D408, C409–K443, S590–E626, L627–F664, K736–E773, G965–N1003, C1119–V1156, R1322–D1354, L1355–A1393, and F1435–R1473. An RING-type; atypical zinc finger spans residues C1558 to R1604.

This sequence belongs to the LTN1 family. Component of the ribosome quality control complex (RQC), composed of the E3 ubiquitin ligase rkr1/ltn1, rqc1 and mtr1/rqc2, as well as cdc48 and its ubiquitin-binding cofactors. RQC forms a stable complex with 60S ribosomal subunits.

The protein resides in the nucleus. It localises to the cytoplasm. Its subcellular location is the cytosol. It catalyses the reaction S-ubiquitinyl-[E2 ubiquitin-conjugating enzyme]-L-cysteine + [acceptor protein]-L-lysine = [E2 ubiquitin-conjugating enzyme]-L-cysteine + N(6)-ubiquitinyl-[acceptor protein]-L-lysine.. The protein operates within protein modification; protein ubiquitination. In terms of biological role, E3 ubiquitin-protein ligase component of the ribosome quality control complex (RQC), a ribosome-associated complex that mediates ubiquitination and extraction of incompletely synthesized nascent chains for proteasomal degradation. Mediates ubiquitination of proteins derived from mRNAs lacking stop codons (non-stop proteins) and other translation arrest products induced by poly-lysine sequences and tandem rare codons. Ubiquitination leads to cdc48 recruitment for extraction and degradation of the incomplete translation product. May indirectly play a role in chromatin function and transcription. The sequence is that of E3 ubiquitin-protein ligase listerin from Schizosaccharomyces pombe (strain 972 / ATCC 24843) (Fission yeast).